Reading from the N-terminus, the 607-residue chain is Elongation factor 4 (607 aa).

A tr-type G domain is found at 11–193; it reads EKIRNFSIIA…QIVEKVPAPT (183 aa). Residues 23–28 and 140–143 contribute to the GTP site; these read DHGKST and NKID.

This sequence belongs to the TRAFAC class translation factor GTPase superfamily. Classic translation factor GTPase family. LepA subfamily.

The protein resides in the cell membrane. It carries out the reaction GTP + H2O = GDP + phosphate + H(+). Its function is as follows. Required for accurate and efficient protein synthesis under certain stress conditions. May act as a fidelity factor of the translation reaction, by catalyzing a one-codon backward translocation of tRNAs on improperly translocated ribosomes. Back-translocation proceeds from a post-translocation (POST) complex to a pre-translocation (PRE) complex, thus giving elongation factor G a second chance to translocate the tRNAs correctly. Binds to ribosomes in a GTP-dependent manner. The sequence is that of Elongation factor 4 from Streptococcus pneumoniae (strain P1031).